The primary structure comprises 24 residues: Neurotoxin 5 (24 aa).

Residues 2 to 24 (RDAYIAQNYNCVYTCFKNDYCND) enclose the LCN-type CS-alpha/beta domain.

It belongs to the long (4 C-C) scorpion toxin superfamily. Sodium channel inhibitor family. Alpha subfamily. As to expression, expressed by the venom gland.

The protein localises to the secreted. Its function is as follows. Binds to sodium channels (Nav) and inhibits the inactivation of the activated channels, thereby blocking neuronal transmission. The chain is Neurotoxin 5 from Buthus occitanus tunetanus (Common European scorpion).